A 330-amino-acid chain; its full sequence is Polyprenal reductase (330 aa).

Residues 1 to 16 (MAGWAGAELSVLNPLR) lie on the Cytoplasmic side of the membrane. Residues 17 to 37 (ALWLLLAAAFLLALLLQLAPA) traverse the membrane as a helical segment. Topologically, residues 38–89 (RLLPSCALFQDLIRYGKTKQSGSRRPAVCRAFDVPKRYFSHFYVVSVLWNGS) are lumenal. Residues 90 to 110 (LLWFLSQSLFLGAPFPSWLWA) traverse the membrane as a helical segment. The Cytoplasmic segment spans residues 111 to 136 (LLRTLGVTQFQALGMESKASRIQGKK). A helical transmembrane segment spans residues 137–157 (LALSTFLVLVFLWVHSLRRLF). At 158–169 (ECFYVSVFSNTA) the chain is on the lumenal side. The helical transmembrane segment at 170 to 190 (IHVVQYCFGLVYYVLVGLTVL) threads the bilayer. The Cytoplasmic segment spans residues 191–206 (SQVPMNDKNVYALGKN). The chain crosses the membrane as a helical span at residues 207–227 (LLLQARWFHILGMMMFFWSSA). Topologically, residues 228 to 277 (HQYKCHVILSNLRRNKKGVVIHCQHRIPFGDWFEYVSSANYLAELMIYIS) are lumenal. The chain crosses the membrane as a helical span at residues 278-298 (MAVTFGLHNVTWWLVVTYVFF). Topologically, residues 299-330 (SQALSAFFNHRFYKSTFVSYPKHRKAFLPFLF) are cytoplasmic.

This sequence belongs to the steroid 5-alpha reductase family. Polyprenal reductase subfamily. As to expression, expressed in the 2 tissues tested i.e. testis and liver.

Its subcellular location is the endoplasmic reticulum membrane. The catalysed reaction is a di-trans,poly-cis-dolichal + NADP(+) = a di-trans,poly-cis-polyprenal + NADPH + H(+). It catalyses the reaction a 3-oxo-5alpha-steroid + NADP(+) = a 3-oxo-Delta(4)-steroid + NADPH + H(+). The enzyme catalyses androst-4-ene-3,17-dione + NADPH + H(+) = 5alpha-androstan-3,17-dione + NADP(+). It carries out the reaction 17beta-hydroxy-5alpha-androstan-3-one + NADP(+) = testosterone + NADPH + H(+). It participates in protein modification; protein glycosylation. Functionally, plays a key role in early steps of protein N-linked glycosylation by being involved in the conversion of polyprenol into dolichol. Acts as a polyprenal reductase that mediates the reduction of polyprenal into dolichal in a NADP-dependent mechanism. Dolichols are required for the synthesis of dolichol-linked monosaccharides and the oligosaccharide precursor used for N-glycosylation. Also able to convert testosterone (T) into 5-alpha-dihydrotestosterone (DHT). The chain is Polyprenal reductase from Rattus norvegicus (Rat).